The following is a 216-amino-acid chain: Probable nicotinate-nucleotide adenylyltransferase (216 aa).

Belongs to the NadD family.

It carries out the reaction nicotinate beta-D-ribonucleotide + ATP + H(+) = deamido-NAD(+) + diphosphate. The protein operates within cofactor biosynthesis; NAD(+) biosynthesis; deamido-NAD(+) from nicotinate D-ribonucleotide: step 1/1. Functionally, catalyzes the reversible adenylation of nicotinate mononucleotide (NaMN) to nicotinic acid adenine dinucleotide (NaAD). In Shewanella baltica (strain OS223), this protein is Probable nicotinate-nucleotide adenylyltransferase.